The sequence spans 1103 residues: Voltage-dependent calcium channel subunit alpha-2/delta-1 (1103 aa).

The N-terminal stretch at 1 to 24 is a signal peptide; it reads MAAGCLLALTLTLFQSLLIGPSSE. Topologically, residues 25 to 1073 are extracellular; it reads EPFPSAVTIK…VLEDYTDCGG (1049 aa). Residue asparagine 92 is glycosylated (N-linked (GlcNAc...) asparagine). A Phosphoserine modification is found at serine 119. N-linked (GlcNAc...) asparagine glycosylation is found at asparagine 136 and asparagine 184. Residues 253 to 430 form the VWFA domain; it reads DMLILVDVSG…INTQEYLDVL (178 aa). A divalent metal cation is bound by residues aspartate 259, serine 261, and serine 263. Residues 259 to 263 carry the MIDAS-like motif motif; that stretch reads DVSGS. N-linked (GlcNAc...) asparagine glycosylation is found at asparagine 324, asparagine 348, asparagine 468, asparagine 475, asparagine 604, asparagine 613, asparagine 675, asparagine 781, asparagine 824, asparagine 888, asparagine 895, asparagine 985, and asparagine 998. Cysteines 404 and 1059 form a disulfide. The region spanning 446–556 is the Cache domain; it reads WTNVYLDALE…NIQNPKSQEP (111 aa). The helical transmembrane segment at 1074–1094 threads the bilayer; it reads VSGLNPSLWYIIGIQFLLLWL. Residues 1095-1103 are Cytoplasmic-facing; the sequence is VSGSTHRLL.

This sequence belongs to the calcium channel subunit alpha-2/delta family. As to quaternary structure, dimer formed of alpha-2-1 and delta-1 chains; disulfide-linked. Voltage-dependent calcium channels are multisubunit complexes, consisting of alpha-1 (CACNA1), alpha-2 (CACNA2D), beta (CACNB) and delta (CACNA2D) subunits in a 1:1:1:1 ratio. Proteolytically processed into subunits alpha-2-1 and delta-1 that are disulfide-linked. In terms of tissue distribution, isoform 1 is expressed in skeletal muscle. Isoform 2 is expressed in the central nervous system. Isoform 2, isoform 4 and isoform 5 are expressed in neuroblastoma cells. Isoform 3, isoform 4 and isoform 5 are expressed in the aorta.

Its subcellular location is the membrane. It is found in the cell membrane. In terms of biological role, the alpha-2/delta subunit of voltage-dependent calcium channels regulates calcium current density and activation/inactivation kinetics of the calcium channel. Plays an important role in excitation-contraction coupling. This is Voltage-dependent calcium channel subunit alpha-2/delta-1 (CACNA2D1) from Homo sapiens (Human).